Here is a 167-residue protein sequence, read N- to C-terminus: Photosystem I assembly protein Ycf3 (167 aa).

TPR repeat units lie at residues 35–68, 72–105, and 120–153; these read AFTY…EIDP, SYIL…NPSL, and GEQA…APNN.

This sequence belongs to the Ycf3 family.

Its subcellular location is the plastid. The protein resides in the chloroplast thylakoid membrane. Functionally, essential for the assembly of the photosystem I (PSI) complex. May act as a chaperone-like factor to guide the assembly of the PSI subunits. This chain is Photosystem I assembly protein Ycf3, found in Zygnema circumcarinatum (Green alga).